We begin with the raw amino-acid sequence, 537 residues long: Frizzled-4 (537 aa).

A signal peptide spans 1–36; that stretch reads MAWPGTGPSSRGAPGGVGLRLGLLLQFLLLLRPTLG. Residues 37–212 lie on the Extracellular side of the membrane; sequence FGDEEERRCD…KCGYDAGLYS (176 aa). The FZ domain maps to 40 to 161; the sequence is EEERRCDPIR…NDHNHMCMEG (122 aa). Cystine bridges form between Cys45–Cys106, Cys53–Cys99, Cys90–Cys128, Cys117–Cys158, Cys121–Cys145, Cys181–Cys200, Cys204–Cys282, and Cys302–Cys377. N-linked (GlcNAc...) asparagine glycosylation occurs at Asn59. N-linked (GlcNAc...) asparagine glycosylation occurs at Asn144. The helical transmembrane segment at 213–243 threads the bilayer; sequence RSAKEFTDIWMAVWASLCFISTTFTVLTFLI. Topologically, residues 244–249 are cytoplasmic; the sequence is DSSRFS. Residues 250 to 275 form a helical membrane-spanning segment; the sequence is YPERPIIFLSMCYNIYSIAYIVRLTV. Over 276-299 the chain is Extracellular; sequence GRERISCDFEEAAEPVLIQEGLKN. A helical transmembrane segment spans residues 300–333; that stretch reads TGCAIIFLLMYFFGMASSIWWVILTLTWFLAAGL. The Cytoplasmic segment spans residues 334 to 336; the sequence is KWG. The chain crosses the membrane as a helical span at residues 337-365; it reads HEAIEMHSSYFHIAAWAIPAVKTIVILIM. Residues 366-383 are Extracellular-facing; it reads RLVDADELTGLCYVGNQN. A helical membrane pass occupies residues 384–410; that stretch reads LDALTGFVVAPLFTYLVIGTLFIAAGL. The Cytoplasmic segment spans residues 411–431; that stretch reads VALFKIRSNLQKDGTKTDKLE. Residues 432–460 form a helical membrane-spanning segment; it reads RLMVKIGVFSVLYTVPATCVIACYFYEIS. Residues 461–473 are Extracellular-facing; it reads NWALFRYSADDSN. A helical transmembrane segment spans residues 474 to 495; it reads MAVEMLKIFMSLLVGITSGMWI. The Cytoplasmic segment spans residues 496–537; sequence WSAKTLHTWQKCSNRLVNSGKVKREKRGNGWVKPGKGNETVV. Residues 499-504 carry the Lys-Thr-X-X-X-Trp motif, mediates interaction with the PDZ domain of Dvl family members motif; that stretch reads KTLHTW. Residues 535 to 537 carry the PDZ-binding motif; that stretch reads TVV.

The protein belongs to the G-protein coupled receptor Fz/Smo family. In terms of assembly, interacts with MAGI3 and NDP. Component of a complex, at least composed of TSPAN12, FZD4 and norrin (NDP). Interacts (via FZ domain) with TSKU; TSKU competes with WNT2B for binding to FZD4, inhibiting Wnt signaling and repressing peripheral eye development. Interacts with glypican GPC3. Post-translationally, ubiquitinated by ZNRF3, leading to its degradation by the proteasome. As to expression, expressed in chondrocytes.

It is found in the cell membrane. Receptor for Wnt proteins. Most frizzled receptors are coupled to the beta-catenin (CTNNB1) canonical signaling pathway, which leads to the activation of disheveled proteins, inhibition of GSK-3 kinase, nuclear accumulation of beta-catenin (CTNNB1) and activation of Wnt target genes. Plays a critical role in retinal vascularization by acting as a receptor for Wnt proteins and norrin (NDP). In retina, it can be activated by Wnt protein-binding and also by Wnt-independent signaling via binding of norrin (NDP), promoting in both cases beta-catenin (CTNNB1) accumulation and stimulation of LEF/TCF-mediated transcriptional programs. A second signaling pathway involving PKC and calcium fluxes has been seen for some family members, but it is not yet clear if it represents a distinct pathway or if it can be integrated in the canonical pathway, as PKC seems to be required for Wnt-mediated inactivation of GSK-3 kinase. Both pathways seem to involve interactions with G-proteins. May be involved in transduction and intercellular transmission of polarity information during tissue morphogenesis and/or in differentiated tissues. Activation by Wnt5A stimulates PKC activity via a G-protein-dependent mechanism. In Mus musculus (Mouse), this protein is Frizzled-4 (Fzd4).